Reading from the N-terminus, the 214-residue chain is Riboflavin kinase (214 aa).

Residues 1-26 (MRPDGPRDPVVGPDSGPEPPYPVRLS) are disordered. Mg(2+) is bound by residues threonine 44 and asparagine 46. Residue glutamate 112 is the Nucleophile of the active site.

It belongs to the flavokinase family. The cofactor is Zn(2+). It depends on Mg(2+) as a cofactor.

It carries out the reaction riboflavin + ATP = FMN + ADP + H(+). Its pathway is cofactor biosynthesis; FMN biosynthesis; FMN from riboflavin (ATP route): step 1/1. Functionally, catalyzes the phosphorylation of riboflavin (vitamin B2) to form flavin mononucleotide (FMN) coenzyme. In Aspergillus clavatus (strain ATCC 1007 / CBS 513.65 / DSM 816 / NCTC 3887 / NRRL 1 / QM 1276 / 107), this protein is Riboflavin kinase (fmn1).